Consider the following 347-residue polypeptide: NADH-quinone oxidoreductase subunit H (347 aa).

Transmembrane regions (helical) follow at residues 13-33, 50-70, 82-102, 115-135, 161-181, 198-218, 248-268, 286-306, and 325-345; these read LIIA…VAYL, PNVV…KFVF, GVFL…WAVI, VGIL…IMGG, IGFV…TDIV, FLDW…ISAL, FLLF…LMTV, VPGI…FAMV, and VFLP…KVFG.

This sequence belongs to the complex I subunit 1 family. NDH-1 is composed of 14 different subunits. Subunits NuoA, H, J, K, L, M, N constitute the membrane sector of the complex.

It localises to the cell inner membrane. The catalysed reaction is a quinone + NADH + 5 H(+)(in) = a quinol + NAD(+) + 4 H(+)(out). In terms of biological role, NDH-1 shuttles electrons from NADH, via FMN and iron-sulfur (Fe-S) centers, to quinones in the respiratory chain. The immediate electron acceptor for the enzyme in this species is believed to be ubiquinone. Couples the redox reaction to proton translocation (for every two electrons transferred, four hydrogen ions are translocated across the cytoplasmic membrane), and thus conserves the redox energy in a proton gradient. This subunit may bind ubiquinone. This is NADH-quinone oxidoreductase subunit H from Brucella abortus (strain 2308).